The chain runs to 113 residues: MAKNRFPGLGGGFNINQLQKQAKKIQEEIEKLQEELNQREIEATAGGGAVKVVINGKKEIKSIEISPEVVDPDDIETLQDLIVACVNEAIRKVEKMIEEEMQKVAGFGFTGLF.

It belongs to the YbaB/EbfC family. In terms of assembly, homodimer.

Its subcellular location is the cytoplasm. The protein localises to the nucleoid. Its function is as follows. Binds to DNA and alters its conformation. May be involved in regulation of gene expression, nucleoid organization and DNA protection. This is Nucleoid-associated protein Csac_1593 from Caldicellulosiruptor saccharolyticus (strain ATCC 43494 / DSM 8903 / Tp8T 6331).